A 209-amino-acid polypeptide reads, in one-letter code: Endoplasmic reticulum vesicle protein 25 (209 aa).

A signal peptide spans 1–18 (MKYTTFGIISLFLSVTWA). Residues 19 to 178 (LRFELAASFE…TNESTNRRVR (160 aa)) are Lumenal-facing. The GOLD domain occupies 31–119 (PFCIRDFVEA…MRNVEVNIES (89 aa)). A helical transmembrane segment spans residues 179 to 199 (NFSMAVIVVFAALCAWQLNYL). The Cytoplasmic portion of the chain corresponds to 200–209 (KNYFRAKHII).

It belongs to the EMP24/GP25L family.

It is found in the endoplasmic reticulum membrane. The protein resides in the golgi apparatus membrane. Its function is as follows. Constituent of COPII-coated endoplasmic reticulum-derived transport vesicles. Required for efficient transport of a subset of secretory proteins to the Golgi. Facilitates retrograde transport from the Golgi to the endoplasmic reticulum. This is Endoplasmic reticulum vesicle protein 25 (ERV25) from Eremothecium gossypii (strain ATCC 10895 / CBS 109.51 / FGSC 9923 / NRRL Y-1056) (Yeast).